The primary structure comprises 85 residues: Small ribosomal subunit protein uS17 (85 aa).

It belongs to the universal ribosomal protein uS17 family. Part of the 30S ribosomal subunit.

In terms of biological role, one of the primary rRNA binding proteins, it binds specifically to the 5'-end of 16S ribosomal RNA. The chain is Small ribosomal subunit protein uS17 from Geobacter sulfurreducens (strain ATCC 51573 / DSM 12127 / PCA).